A 148-amino-acid polypeptide reads, in one-letter code: Protein RESISTANCE TO POWDERY MILDEW 8.1 (148 aa).

The region spanning 1–148 is the RPW8 domain; that stretch reads MPIGELAIGA…VISACSKIRA (148 aa). The chain crosses the membrane as a helical span at residues 7–23; it reads AIGAVLGVGAQAIYDRF. A coiled-coil region spans residues 120-140; the sequence is DDIKEIKAKISEMDTKLAEVI.

Belongs to the plant RPW8 protein family.

It localises to the membrane. Functionally, disease resistance (R) protein that induces localized, salicylic acid-dependent defenses. Confers resistance to powdery mildew (e.g. Erysiphe cichoracearum UCSC1). The sequence is that of Protein RESISTANCE TO POWDERY MILDEW 8.1 from Arabidopsis thaliana (Mouse-ear cress).